A 621-amino-acid polypeptide reads, in one-letter code: Anthranilate synthase alpha subunit 2, chloroplastic (621 aa).

The transit peptide at 1–87 (MSAVSISAVK…SEEQFTKFKK (87 aa)) directs the protein to the chloroplast.

This sequence belongs to the anthranilate synthase component I family. Heterotetramer consisting of two non-identical subunits: a beta subunit and a large alpha subunit.

Its subcellular location is the plastid. It is found in the chloroplast. The catalysed reaction is chorismate + L-glutamine = anthranilate + pyruvate + L-glutamate + H(+). It participates in amino-acid biosynthesis; L-tryptophan biosynthesis; L-tryptophan from chorismate: step 1/5. Feedback inhibition by tryptophan. Functionally, part of a heterotetrameric complex that catalyzes the two-step biosynthesis of anthranilate, an intermediate in the biosynthesis of L-tryptophan. In the first step, the glutamine-binding beta subunit of anthranilate synthase (AS) provides the glutamine amidotransferase activity which generates ammonia as a substrate that, along with chorismate, is used in the second step, catalyzed by the large alpha subunit of AS to produce anthranilate. This chain is Anthranilate synthase alpha subunit 2, chloroplastic (ASA2), found in Arabidopsis thaliana (Mouse-ear cress).